Consider the following 381-residue polypeptide: Probable tRNA sulfurtransferase (381 aa).

Residues 52–155 (LTNLDALKYV…DASTYIFIDY (104 aa)) enclose the THUMP domain. Residues 173–174 (LM), 198–199 (NF), Arg-255, Gly-277, and Gln-286 each bind ATP.

It belongs to the ThiI family.

The protein localises to the cytoplasm. The catalysed reaction is [ThiI sulfur-carrier protein]-S-sulfanyl-L-cysteine + a uridine in tRNA + 2 reduced [2Fe-2S]-[ferredoxin] + ATP + H(+) = [ThiI sulfur-carrier protein]-L-cysteine + a 4-thiouridine in tRNA + 2 oxidized [2Fe-2S]-[ferredoxin] + AMP + diphosphate. It carries out the reaction [ThiS sulfur-carrier protein]-C-terminal Gly-Gly-AMP + S-sulfanyl-L-cysteinyl-[cysteine desulfurase] + AH2 = [ThiS sulfur-carrier protein]-C-terminal-Gly-aminoethanethioate + L-cysteinyl-[cysteine desulfurase] + A + AMP + 2 H(+). Its pathway is cofactor biosynthesis; thiamine diphosphate biosynthesis. Catalyzes the ATP-dependent transfer of a sulfur to tRNA to produce 4-thiouridine in position 8 of tRNAs, which functions as a near-UV photosensor. Also catalyzes the transfer of sulfur to the sulfur carrier protein ThiS, forming ThiS-thiocarboxylate. This is a step in the synthesis of thiazole, in the thiamine biosynthesis pathway. The sulfur is donated as persulfide by IscS. The protein is Probable tRNA sulfurtransferase of Metamycoplasma arthritidis (strain 158L3-1) (Mycoplasma arthritidis).